The following is a 67-amino-acid chain: Large ribosomal subunit protein bL35 (67 aa).

Belongs to the bacterial ribosomal protein bL35 family.

In Mesorhizobium japonicum (strain LMG 29417 / CECT 9101 / MAFF 303099) (Mesorhizobium loti (strain MAFF 303099)), this protein is Large ribosomal subunit protein bL35.